A 192-amino-acid chain; its full sequence is UPF0301 protein Rru_A3059 (192 aa).

The protein belongs to the UPF0301 (AlgH) family.

The polypeptide is UPF0301 protein Rru_A3059 (Rhodospirillum rubrum (strain ATCC 11170 / ATH 1.1.1 / DSM 467 / LMG 4362 / NCIMB 8255 / S1)).